The chain runs to 561 residues: Sperm-tail PG-rich repeat-containing protein 2 (561 aa).

STPGR repeat units follow at residues 21–34 (VGPG…PKQQ), 63–72 (PGPAHYNVSQ), and 97–104 (GPGPGSYN). A disordered region spans residues 123–143 (PAVSRNIDIPSIPSSGKSHGY). 7 STPGR repeats span residues 164–191 (GPAY…NATG), 200–210 (GPGPGQYDIIQ), 250–285 (PGPG…TERF), 292–299 (TPAPGTYN), 334–367 (LPGP…FGSS), 421–438 (LPAP…MSQV), and 471–481 (GPGPATYSPVL).

This is Sperm-tail PG-rich repeat-containing protein 2 (Stpg2) from Mus musculus (Mouse).